Consider the following 466-residue polypeptide: MAAARSRVVHLLRLLQRAACQCPSHSHTYSQAPGLSPSGKTTDYAFEMAVSTIRYGAGVTKEVGMDLQSMGAKNVCLMTDKNLSQLPPVQTVMDSLVKNGINFKVYDHVRVEPTDTSFMEAIEFAKKGAFDAFLAVGGGSTIDTCKAANLYSSSPDSDFLDYVNAPIGKGKPVTVPLKPLIAVPTTSGTGSETTGVAIFDYEHLKVKTGIASRAIKPTLGLIDPLHTLHMPERVVANSGFDVLCHALESYTALPYHMRSPCPSSPITRPAYQGSNPISDIWAVHALRIVAKYLKRAIRNPDDLEARSNMHLASAFAGIGFGNAGVHLCHGMSYPISGLVKTYKAKDYNVDHPLVPHGLSVVLTSPAVFTFTSQMFPERHLEVAEILGADTRTARRPDAGPVLADTLRKFLFDLDVDDGLAAIGYSKADIPELVKGTLPQERVTKLAPRPQSEEDLSALFEASMKLY.

The residue at position 444 (Lys-444) is an N6-acetyllysine. The residue at position 451 (Ser-451) is a Phosphoserine.

This sequence belongs to the iron-containing alcohol dehydrogenase family. Hydroxyacid-oxoacid transhydrogenase subfamily.

Its subcellular location is the mitochondrion. The enzyme catalyses (S)-3-hydroxybutanoate + 2-oxoglutarate = (R)-2-hydroxyglutarate + acetoacetate. It carries out the reaction 4-hydroxybutanoate + 2-oxoglutarate = (R)-2-hydroxyglutarate + succinate semialdehyde. Catalyzes the cofactor-independent reversible oxidation of gamma-hydroxybutyrate (GHB) to succinic semialdehyde (SSA) coupled to reduction of 2-ketoglutarate (2-KG) to D-2-hydroxyglutarate (D-2-HG). L-3-hydroxybutyrate (L-3-OHB) is also a substrate for HOT when using 2-KG as hydrogen acceptor, resulting in the formation of D-2-HG. The polypeptide is Hydroxyacid-oxoacid transhydrogenase, mitochondrial (ADHFE1) (Bos taurus (Bovine)).